The chain runs to 121 residues: Small ribosomal subunit protein uS13 (121 aa).

Residues 91–121 (HKRGLPVRGQRTRTNARTRKGPRRAAASLKK) are disordered.

The protein belongs to the universal ribosomal protein uS13 family. As to quaternary structure, part of the 30S ribosomal subunit. Forms a loose heterodimer with protein S19. Forms two bridges to the 50S subunit in the 70S ribosome.

Functionally, located at the top of the head of the 30S subunit, it contacts several helices of the 16S rRNA. In the 70S ribosome it contacts the 23S rRNA (bridge B1a) and protein L5 of the 50S subunit (bridge B1b), connecting the 2 subunits; these bridges are implicated in subunit movement. Contacts the tRNAs in the A and P-sites. This is Small ribosomal subunit protein uS13 from Bordetella avium (strain 197N).